Here is a 190-residue protein sequence, read N- to C-terminus: Elongation factor P-like protein (190 aa).

The protein belongs to the elongation factor P family.

This is Elongation factor P-like protein from Pectobacterium carotovorum subsp. carotovorum (strain PC1).